The chain runs to 117 residues: Prefoldin subunit beta (117 aa).

This sequence belongs to the prefoldin subunit beta family. As to quaternary structure, heterohexamer of two alpha and four beta subunits.

It localises to the cytoplasm. In terms of biological role, molecular chaperone capable of stabilizing a range of proteins. Seems to fulfill an ATP-independent, HSP70-like function in archaeal de novo protein folding. The chain is Prefoldin subunit beta (pfdB) from Pyrococcus horikoshii (strain ATCC 700860 / DSM 12428 / JCM 9974 / NBRC 100139 / OT-3).